A 127-amino-acid polypeptide reads, in one-letter code: Glycine cleavage system H protein (127 aa).

The 83-residue stretch at 22 to 104 (EVVIGITHFA…YEGAWMVKVE (83 aa)) folds into the Lipoyl-binding domain. Lys63 carries the post-translational modification N6-lipoyllysine.

Belongs to the GcvH family. The glycine cleavage system is composed of four proteins: P, T, L and H. Requires (R)-lipoate as cofactor.

Its function is as follows. The glycine cleavage system catalyzes the degradation of glycine. The H protein shuttles the methylamine group of glycine from the P protein to the T protein. Is also involved in protein lipoylation via its role as an octanoyl/lipoyl carrier protein intermediate. This is Glycine cleavage system H protein from Bacillus cereus (strain ZK / E33L).